The sequence spans 416 residues: Phosphoglycerate kinase (416 aa).

Residue S2 is modified to N-acetylserine. 10 residues coordinate (2R)-3-phosphoglycerate: V23, D24, F25, N26, Q38, R39, S62, H63, G65, and R66. K82 is covalently cross-linked (Glycyl lysine isopeptide (Lys-Gly) (interchain with G-Cter in ubiquitin)). Phosphothreonine is present on T93. S110 carries the phosphoserine modification. 2 residues coordinate (2R)-3-phosphoglycerate: L121 and R122. Phosphoserine is present on residues S130 and S154. Positions 168 and 169 each coordinate (2R)-3-phosphoglycerate. Phosphoserine is present on S172. A Glycyl lysine isopeptide (Lys-Gly) (interchain with G-Cter in ubiquitin) cross-link involves residue K197. T203 is modified (phosphothreonine). Position 212 (G212) interacts with ADP. G212 contributes to the CDP binding site. AMP is bound by residues A213 and K214. Residues A213 and K214 each contribute to the ATP site. A213 lines the Mg(2+) pocket. Positions 216 and 217 each coordinate Mg(2+). D217 contacts CDP. AMP is bound at residue K218. K218 lines the ATP pocket. An ADP-binding site is contributed by G236. G236 is a binding site for CDP. G237 provides a ligand contact to AMP. ATP is bound at residue G237. At T241 the chain carries Phosphothreonine. Glycyl lysine isopeptide (Lys-Gly) (interchain with G-Cter in ubiquitin) cross-links involve residues K258 and K274. The residue at position 298 (T298) is a Phosphothreonine. K302 is covalently cross-linked (Glycyl lysine isopeptide (Lys-Gly) (interchain with G-Cter in ubiquitin)). G311 contributes to the AMP binding site. ATP is bound by residues G311 and L312. Position 318 is a phosphoserine (S318). Position 331 is a phosphothreonine (T331). Position 335 (N335) interacts with ATP. Residues G336 and F341 each contribute to the CDP site. Position 341 (F341) interacts with ADP. An AMP-binding site is contributed by E342. ATP is bound at residue E342. A (2R)-3-phosphoglycerate-binding site is contributed by G371. D373 and T374 together coordinate ATP. D373 contributes to the Mg(2+) binding site. Phosphothreonine is present on T392. Residues G394 and G395 each contribute to the (2R)-3-phosphoglycerate site.

The protein belongs to the phosphoglycerate kinase family. In terms of assembly, monomer. Requires Mg(2+) as cofactor.

Its subcellular location is the cytoplasm. It localises to the mitochondrion. The catalysed reaction is (2R)-3-phosphoglycerate + ATP = (2R)-3-phospho-glyceroyl phosphate + ADP. It participates in carbohydrate degradation; glycolysis; pyruvate from D-glyceraldehyde 3-phosphate: step 2/5. Functionally, catalyzes one of the two ATP producing reactions in the glycolytic pathway via the reversible conversion of 1,3-diphosphoglycerate to 3-phosphoglycerate. Both L- and D- forms of purine and pyrimidine nucleotides can be used as substrates, but the activity is much lower on pyrimidines. Negatively regulates the biosynthesis of acetyl-CoA from pyruvate in the mitochondrion. This is Phosphoglycerate kinase (PGK1) from Saccharomyces cerevisiae (strain ATCC 204508 / S288c) (Baker's yeast).